Here is a 517-residue protein sequence, read N- to C-terminus: UDP-N-acetylmuramoyl-tripeptide--D-alanyl-D-alanine ligase (517 aa).

138-144 is a binding site for ATP; the sequence is GSSGKTS.

The protein belongs to the MurCDEF family. MurF subfamily.

It is found in the cytoplasm. It catalyses the reaction D-alanyl-D-alanine + UDP-N-acetyl-alpha-D-muramoyl-L-alanyl-gamma-D-glutamyl-meso-2,6-diaminopimelate + ATP = UDP-N-acetyl-alpha-D-muramoyl-L-alanyl-gamma-D-glutamyl-meso-2,6-diaminopimeloyl-D-alanyl-D-alanine + ADP + phosphate + H(+). Its pathway is cell wall biogenesis; peptidoglycan biosynthesis. Involved in cell wall formation. Catalyzes the final step in the synthesis of UDP-N-acetylmuramoyl-pentapeptide, the precursor of murein. The chain is UDP-N-acetylmuramoyl-tripeptide--D-alanyl-D-alanine ligase from Mycobacterium leprae (strain TN).